A 310-amino-acid chain; its full sequence is Malate dehydrogenase (310 aa).

NAD(+)-binding positions include 7-13 (GAAGGIG) and Asp-34. The substrate site is built by Arg-81 and Arg-87. NAD(+)-binding positions include Asn-94 and 117–119 (ITN). Positions 119 and 153 each coordinate substrate. The Proton acceptor role is filled by His-177. Met-227 serves as a coordination point for NAD(+).

It belongs to the LDH/MDH superfamily. MDH type 1 family. Homodimer.

The catalysed reaction is (S)-malate + NAD(+) = oxaloacetate + NADH + H(+). Its function is as follows. Catalyzes the reversible oxidation of malate to oxaloacetate. The sequence is that of Malate dehydrogenase from Idiomarina loihiensis (strain ATCC BAA-735 / DSM 15497 / L2-TR).